Consider the following 1382-residue polypeptide: Hepatocyte growth factor receptor (1382 aa).

An N-terminal signal peptide occupies residues 1–24 (MKASAVLAPGILVILFTLVQKSNC). Residues 25-933 (ECKEALVKSK…VIVQPDQNIT (909 aa)) lie on the Extracellular side of the membrane. A Sema domain is found at 27 to 516 (KEALVKSKMN…TGKKITKIPL (490 aa)). Asn45 carries N-linked (GlcNAc...) asparagine glycosylation. Disulfide bonds link Cys95/Cys101, Cys98/Cys160, Cys133/Cys141, and Cys173/Cys176. Residue Asn106 is glycosylated (N-linked (GlcNAc...) asparagine). N-linked (GlcNAc...) asparagine glycosylation is found at Asn203 and Asn359. Intrachain disulfides connect Cys299-Cys364 and Cys386-Cys398. 2 N-linked (GlcNAc...) asparagine glycosylation sites follow: Asn400 and Asn406. 4 disulfide bridges follow: Cys521/Cys539, Cys527/Cys562, Cys530/Cys546, and Cys542/Cys552. IPT/TIG domains lie at 564-656 (PTIY…FSYV), 658-740 (PIIT…FSYQ), and 743-837 (PIIY…LIYV). Thr583 carries an O-linked (Man) threonine glycan. Residues Asn608 and Asn636 are each glycosylated (N-linked (GlcNAc...) asparagine). O-linked (Man) threonine glycosylation is found at Thr677 and Thr762. Residues Asn786, Asn880, and Asn931 are each glycosylated (N-linked (GlcNAc...) asparagine). The helical transmembrane segment at 934–956 (EFIVGILSISGILLTLLGLLLWW) threads the bilayer. Over 957–1382 (KKKKQIKDLG…QDNFDSEGNT (426 aa)) the chain is Cytoplasmic. Position 967 is a phosphoserine (Ser967). The residue at position 978 (Thr978) is a Phosphothreonine. Phosphoserine occurs at positions 991, 998, and 1001. Phosphotyrosine is present on Tyr1004. Residues 1079–1346 (VHFNEVIGRG…RISAIFSTFI (268 aa)) form the Protein kinase domain. ATP is bound by residues 1085-1093 (IGRGHFGCV) and Lys1111. Catalysis depends on Asp1205, which acts as the Proton acceptor. The interval 1213–1382 (LDENFTVKVA…QDNFDSEGNT (170 aa)) is interaction with RANBP9. Tyr1231 bears the Phosphotyrosine mark. Phosphotyrosine; by autocatalysis is present on residues Tyr1235 and Tyr1236. Thr1290 bears the Phosphothreonine mark. Residues 1321-1360 (WHPKAELRPSFSELVSRISAIFSTFIGEHYVHVNATYVNI) are interaction with MUC20. Phosphotyrosine; by autocatalysis is present on residues Tyr1350 and Tyr1357. Tyr1366 is modified (phosphotyrosine).

The protein belongs to the protein kinase superfamily. Tyr protein kinase family. In terms of assembly, heterodimer made of an alpha chain (50 kDa) and a beta chain (145 kDa) which are disulfide linked. Binds PLXNB1. Interacts when phosphorylated with downstream effectors including STAT3, PIK3R1, SRC, PCLG1, GRB2 and GAB1. Interacts with SPSB1, SPSB2 and SPSB4. Interacts with INPP5D/SHIP1. When phosphorylated at Tyr-1357, interacts with INPPL1/SHIP2. Interacts with RANBP9 and RANBP10, as well as SPSB1, SPSB2, SPSB3 and SPSB4. SPSB1 binding occurs in the presence and in the absence of HGF, however HGF treatment has a positive effect on this interaction. Interacts with MUC20; prevents interaction with GRB2 and suppresses hepatocyte growth factor-induced cell proliferation. Interacts with GRB10. Interacts with PTPN1 and PTPN2. Interacts with tensin TNS3. Interacts (when phosphorylated) with tensin TNS4 (via SH2 domain); the interaction increases MET protein stability by inhibiting MET endocytosis and subsequent lysosomal degradation. Autophosphorylated in response to ligand binding on Tyr-1235 and Tyr-1236 in the kinase domain leading to further phosphorylation of Tyr-1350 and Tyr-1357 in the C-terminal multifunctional docking site. Dephosphorylated by PTPRJ at Tyr-1350 and Tyr-1366. Dephosphorylated by PTPN1 and PTPN2. Post-translationally, ubiquitinated. Ubiquitination by CBL regulates the receptor stability and activity through proteasomal degradation. In terms of processing, O-mannosylation of IPT/TIG domains by TMEM260 is required for protein maturation. O-mannosylated residues are composed of single mannose glycans that are not elongated or modified.

The protein localises to the membrane. It catalyses the reaction L-tyrosyl-[protein] + ATP = O-phospho-L-tyrosyl-[protein] + ADP + H(+). With respect to regulation, in its inactive state, the C-terminal tail interacts with the catalytic domain and inhibits the kinase activity. Upon ligand binding, the C-terminal tail is displaced and becomes phosphorylated, thus increasing the kinase activity. Receptor tyrosine kinase that transduces signals from the extracellular matrix into the cytoplasm by binding to hepatocyte growth factor/HGF ligand. Regulates many physiological processes including proliferation, scattering, morphogenesis and survival. Ligand binding at the cell surface induces autophosphorylation of MET on its intracellular domain that provides docking sites for downstream signaling molecules. Following activation by ligand, interacts with the PI3-kinase subunit PIK3R1, PLCG1, SRC, GRB2, STAT3 or the adapter GAB1. Recruitment of these downstream effectors by MET leads to the activation of several signaling cascades including the RAS-ERK, PI3 kinase-AKT, or PLCgamma-PKC. The RAS-ERK activation is associated with the morphogenetic effects while PI3K/AKT coordinates prosurvival effects. During embryonic development, MET signaling plays a role in gastrulation, development and migration of muscles and neuronal precursors, angiogenesis and kidney formation. In adults, participates in wound healing as well as organ regeneration and tissue remodeling. Also promotes differentiation and proliferation of hematopoietic cells. The sequence is that of Hepatocyte growth factor receptor (MET) from Atelerix albiventris (Middle-African hedgehog).